Consider the following 331-residue polypeptide: Geranylgeranyl transferase type-2 subunit beta (331 aa).

At Gly2 the chain carries N-acetylglycine. Thr3 is modified (phosphothreonine). 6 PFTB repeats span residues 20 to 61 (LEKH…DLMG), 68 to 109 (REEI…TLYD), 116 to 157 (INKV…ALLG), 164 to 205 (VEKA…AITS), 212 to 253 (SDLL…KIIG), and 260 to 302 (REKL…SLLG). 190 to 192 (HAG) lines the geranylgeranyl diphosphate pocket. Zn(2+) contacts are provided by Asp238 and Cys240. A geranylgeranyl diphosphate-binding site is contributed by 241-244 (YSWW). His290 lines the Zn(2+) pocket.

This sequence belongs to the protein prenyltransferase subunit beta family. In terms of assembly, heterotrimer composed of RABGGTA, RABGGTB and CHM; within this trimer, RABGGTA and RABGGTB form the catalytic component B, while CHM (component A) mediates peptide substrate binding. The Rab GGTase dimer (RGGT) interacts with CHM (component A) prior to Rab protein binding; the association is stabilized by geranylgeranyl pyrophosphate (GGpp). The CHM:RGGT:Rab complex is destabilized by GGpp. Interaction of RABGGTB with prenylated PTP4A2 precludes its association with RABGGTA and inhibits enzyme activity. Interacts with CHODL. Interacts with non-phosphorylated form of RAB8A; phosphorylation of RAB8A at 'Thr-72' disrupts this interaction. Requires Zn(2+) as cofactor.

The catalysed reaction is geranylgeranyl diphosphate + L-cysteinyl-[protein] = S-geranylgeranyl-L-cysteinyl-[protein] + diphosphate. Its activity is regulated as follows. The enzymatic reaction requires the aid of a Rab escort protein (also called component A). Its function is as follows. Catalyzes the transfer of a geranylgeranyl moiety from geranylgeranyl diphosphate to both cysteines of Rab proteins with the C-terminal sequence -XXCC, -XCXC and -CCXX, such as RAB1A, RAB3A, RAB5A and RAB7A. The polypeptide is Geranylgeranyl transferase type-2 subunit beta (RABGGTB) (Bos taurus (Bovine)).